Here is a 205-residue protein sequence, read N- to C-terminus: Thymidylate kinase (205 aa).

Position 11 to 18 (11 to 18) interacts with ATP; it reads GPEGSGKT.

This sequence belongs to the thymidylate kinase family.

It carries out the reaction dTMP + ATP = dTDP + ADP. Phosphorylation of dTMP to form dTDP in both de novo and salvage pathways of dTTP synthesis. The protein is Thymidylate kinase of Clostridium novyi (strain NT).